The following is a 1305-amino-acid chain: Cyclin-G-associated kinase (1305 aa).

N-acetylserine is present on serine 2. Serine 2 and serine 16 each carry phosphoserine. One can recognise a Protein kinase domain in the interval 40 to 317 (LRVRRVLAEG…EVVRQLQEIA (278 aa)). ATP contacts are provided by residues 46–54 (LAEGGFAFV) and lysine 69. The active-site Proton acceptor is aspartate 173. A Phosphatase tensin-type domain is found at 397–564 (SVANYAKGDL…EYVCDMVAEE (168 aa)). Serine 454 carries the phosphoserine modification. Positions 570 to 708 (SKPMLVKSVV…FQVNLEVEVE (139 aa)) constitute a C2 tensin-type domain. Disordered regions lie at residues 707 to 732 (VEPR…NPKI) and 747 to 854 (FGKP…AAGT). Serine 768 is subject to Phosphoserine. Threonine 774 is subject to Phosphothreonine. Polar residues predominate over residues 776-789 (SDSPQSSSTDTNHF). A Phosphoserine modification is found at serine 781. Phosphothreonine is present on threonine 792. Polar residues predominate over residues 805–816 (LDNTSPKESQSV). Serine 809, serine 824, and serine 827 each carry phosphoserine. Acidic residues predominate over residues 822 to 832 (DGSEVSDEEEA). Over residues 836–848 (SEERKPGAGEDTP) the composition is skewed to basic and acidic residues. Residue serine 938 is modified to Phosphoserine. The disordered stretch occupies residues 1037–1139 (DTWADTATPG…WTPQAKPAPR (103 aa)). Positions 1084 to 1099 (DLSDLSSSLQGLPAGL) are enriched in low complexity. Residues 1111–1132 (TQKSNSPWQANRPTAPGTSWTP) are compositionally biased toward polar residues. The residue at position 1122 (arginine 1122) is an Omega-N-methylarginine. Position 1171 is a phosphoserine (serine 1171). The region spanning 1241–1305 (SRWTPVSMAD…FENQGSRPLF (65 aa)) is the J domain.

This sequence belongs to the protein kinase superfamily. Ser/Thr protein kinase family.

The protein localises to the cytoplasm. The protein resides in the perinuclear region. Its subcellular location is the golgi apparatus. It localises to the trans-Golgi network. It is found in the cell junction. The protein localises to the focal adhesion. The protein resides in the cytoplasmic vesicle. Its subcellular location is the clathrin-coated vesicle. The catalysed reaction is L-seryl-[protein] + ATP = O-phospho-L-seryl-[protein] + ADP + H(+). It catalyses the reaction L-threonyl-[protein] + ATP = O-phospho-L-threonyl-[protein] + ADP + H(+). Functionally, associates with cyclin G and CDK5. Seems to act as an auxilin homolog that is involved in the uncoating of clathrin-coated vesicles by Hsc70 in non-neuronal cells. Expression oscillates slightly during the cell cycle, peaking at G1. May play a role in clathrin-mediated endocytosis and intracellular trafficking, and in the dynamics of clathrin assembly/disassembly. The chain is Cyclin-G-associated kinase from Mus musculus (Mouse).